We begin with the raw amino-acid sequence, 511 residues long: MEKFEEISEKHKSRQQYFVYPLLFQEFLYTFAHDYGLNDSEPVEILSCNKKKFSSLLVKRLIIRMYQQNFWINSVNHPNQDRLLDYKNYFYSDFFSQILSEGFAIVVEIPFSLREFFCPKEKEIPKFQNLRSIHSIFSFLEDKFLHLHSLSHIEIPYPIHLEILVQLLQYHIQDVPSLHLLRFFLNYYSNWNSFITSIKSFFLLKKKNKRLFRFLYNSYVSEYEFFLLFLRKQSSCLPLASSGGFLERIHFSRKMEHFGIMDPGFFRKTLWFFMDPLMHYVRYQGKAILASKGTLFLKKKWKWYLVNFCQYSFSFWTQPRRIHLNQLANSCFDFLGYLSSVPKSTLLVRNQMLENSFLIDTQMTKFDTIVPATLLIGSLSKAQFCTGSGHPISKPIWTELSDWDILDRFGRICKNLFHYHSGSSKKRTLYRLKYILRLSCARTLARKHKSTVRTFMQRLGSVFLEEFFTEEEQVFSLMFTKTTLFYFRGSHSERIWYLDIIRINGLVNPRN.

Belongs to the intron maturase 2 family. MatK subfamily.

It is found in the plastid. The protein resides in the chloroplast. Its function is as follows. Usually encoded in the trnK tRNA gene intron. Probably assists in splicing its own and other chloroplast group II introns. The polypeptide is Maturase K (Brachypodium sylvaticum (False brome)).